Consider the following 362-residue polypeptide: Probable dual-specificity RNA methyltransferase RlmN (362 aa).

Catalysis depends on Glu91, which acts as the Proton acceptor. The Radical SAM core domain maps to 97-329; that stretch reads QHYGLSVCVT…KKNGVNCVVR (233 aa). Cys104 and Cys340 are joined by a disulfide. Positions 111, 115, and 118 each coordinate [4Fe-4S] cluster. S-adenosyl-L-methionine contacts are provided by residues 163-164, Ser195, 218-220, and Asn296; these read GE and SLH. The active-site S-methylcysteine intermediate is the Cys340.

It belongs to the radical SAM superfamily. RlmN family. [4Fe-4S] cluster is required as a cofactor.

The protein localises to the cytoplasm. The catalysed reaction is adenosine(2503) in 23S rRNA + 2 reduced [2Fe-2S]-[ferredoxin] + 2 S-adenosyl-L-methionine = 2-methyladenosine(2503) in 23S rRNA + 5'-deoxyadenosine + L-methionine + 2 oxidized [2Fe-2S]-[ferredoxin] + S-adenosyl-L-homocysteine. It carries out the reaction adenosine(37) in tRNA + 2 reduced [2Fe-2S]-[ferredoxin] + 2 S-adenosyl-L-methionine = 2-methyladenosine(37) in tRNA + 5'-deoxyadenosine + L-methionine + 2 oxidized [2Fe-2S]-[ferredoxin] + S-adenosyl-L-homocysteine. Specifically methylates position 2 of adenine 2503 in 23S rRNA and position 2 of adenine 37 in tRNAs. The sequence is that of Probable dual-specificity RNA methyltransferase RlmN from Streptococcus sanguinis (strain SK36).